The primary structure comprises 1378 residues: Carboxypeptidase D (1378 aa).

The first 37 residues, 1–37, serve as a signal peptide directing secretion; sequence MASGWDERPPWRLESLRLLPPPPLLLLLLLLRSSAQA. The Extracellular portion of the chain corresponds to 38 to 1297; that stretch reads AHIKKAEATT…DNRIFGLPRE (1260 aa). One can recognise a Peptidase M14 1 domain in the interval 62–380; it reads HYYHEAALGE…ESLITLIEKV (319 aa). The Zn(2+) site is built by histidine 139 and glutamate 142. A Cell attachment site motif is present at residues 162–164; that stretch reads RGD. 2 N-linked (GlcNAc...) asparagine glycosylation sites follow: asparagine 172 and asparagine 217. Residues 189 to 232 form a disordered region; sequence RAREGDCGLGDSGPPGTSGRDNSRGRDLNRSFPDQFSTGEPPSL. Histidine 257 contributes to the Zn(2+) binding site. Residue tyrosine 265 is modified to Phosphotyrosine. Serine 270 is subject to Phosphoserine. The active-site Proton donor/acceptor is glutamate 350. 4 N-linked (GlcNAc...) asparagine glycosylation sites follow: asparagine 399, asparagine 410, asparagine 429, and asparagine 522. The region spanning 502-792 is the Peptidase M14 2 domain; it reads HHHHFPDMEI…RSLIQFMKQV (291 aa). Residues histidine 564 and glutamate 567 each contribute to the Zn(2+) site. An N-linked (GlcNAc...) asparagine glycan is attached at asparagine 626. Histidine 671 contributes to the Zn(2+) binding site. Glutamate 762 acts as the Proton donor/acceptor in catalysis. 6 N-linked (GlcNAc...) asparagine glycosylation sites follow: asparagine 811, asparagine 855, asparagine 867, asparagine 879, asparagine 953, and asparagine 976. The segment at 875-898 is disordered; it reads TDANNESKKGKGHSTSTDDTSDPT. A Peptidase M14 3 domain is found at 930-1209; it reads RYHSYKDLSE…KSLLSMLVEV (280 aa). A compositionally biased stretch (basic and acidic residues) spans 1039-1048; the sequence is RERAQEKDCT. The tract at residues 1039 to 1068 is disordered; that stretch reads RERAQEKDCTSKTGHTNARGRDLDTDFTSN. Asparagine 1068 and asparagine 1140 each carry an N-linked (GlcNAc...) asparagine glycan. Residues 1298–1318 traverse the membrane as a helical segment; that stretch reads LVVTVSGATMSALILTACIIW. 3 S-palmitoyl cysteine lipidation sites follow: cysteine 1315, cysteine 1319, and cysteine 1321. The Cytoplasmic portion of the chain corresponds to 1319 to 1378; the sequence is CICSIKSNRHKDGFHRLRQHHDEYEDEIRMMSTGSKKSLLSHEFQDETDTEEETLYSSKH. Phosphoserine is present on residues serine 1356 and serine 1359. The interval 1357 to 1378 is disordered; that stretch reads LLSHEFQDETDTEEETLYSSKH. Phosphothreonine is present on residues threonine 1366 and threonine 1368.

The protein belongs to the peptidase M14 family. It depends on Zn(2+) as a cofactor. In terms of tissue distribution, isoform 1 is widely expressed with highest levels in the hippocampus, spinal cord, atrium, colon, testis and ovaries. Detected in the liver of females but not males. Isoform 2 is not detected in brain or lung.

The protein localises to the cell membrane. The protein resides in the nucleus. It catalyses the reaction Releases C-terminal Arg and Lys from polypeptides.. This is Carboxypeptidase D from Rattus norvegicus (Rat).